A 319-amino-acid chain; its full sequence is Replication factor C small subunit (319 aa).

Position 45 to 52 (45 to 52 (GPPGTGKT)) interacts with ATP.

The protein belongs to the activator 1 small subunits family. RfcS subfamily. As to quaternary structure, heteropentamer composed of four small subunits (RfcS) and one large subunit (RfcL). Both subunits interact with PCNA.

Part of the RFC clamp loader complex which loads the PCNA sliding clamp onto DNA. The complex possesses DNA-dependent ATPase activity which is further stimulated by PCNA. The polypeptide is Replication factor C small subunit (rfcS) (Archaeoglobus fulgidus (strain ATCC 49558 / DSM 4304 / JCM 9628 / NBRC 100126 / VC-16)).